Here is a 261-residue protein sequence, read N- to C-terminus: Pantothenate synthetase (261 aa).

ATP is bound at residue 29–36 (MGALHNGH). His-36 functions as the Proton donor in the catalytic mechanism. Gln-60 is a binding site for (R)-pantoate. Gln-60 contributes to the beta-alanine binding site. Residue 147–150 (GEKD) coordinates ATP. Gln-153 serves as a coordination point for (R)-pantoate. 184 to 187 (LSSR) contacts ATP.

It belongs to the pantothenate synthetase family. Homodimer.

Its subcellular location is the cytoplasm. It carries out the reaction (R)-pantoate + beta-alanine + ATP = (R)-pantothenate + AMP + diphosphate + H(+). It functions in the pathway cofactor biosynthesis; (R)-pantothenate biosynthesis; (R)-pantothenate from (R)-pantoate and beta-alanine: step 1/1. Its function is as follows. Catalyzes the condensation of pantoate with beta-alanine in an ATP-dependent reaction via a pantoyl-adenylate intermediate. This is Pantothenate synthetase from Francisella tularensis subsp. tularensis (strain FSC 198).